We begin with the raw amino-acid sequence, 348 residues long: NADH-ubiquinone oxidoreductase chain 2 (348 aa).

9 helical membrane-spanning segments follow: residues 3 to 23 (PYVL…TFAS), 60 to 80 (FLTQ…NAWM), 96 to 116 (TMFM…FWMP), 149 to 169 (IDPL…GWGG), 178 to 197 (ILAY…IQYA), 202 to 219 (LLAL…FLTL), 246 to 266 (LVLL…KWLI), 274 to 294 (DLPI…YFYL), and 326 to 346 (LALF…ILTL).

This sequence belongs to the complex I subunit 2 family.

The protein resides in the mitochondrion inner membrane. The enzyme catalyses a ubiquinone + NADH + 5 H(+)(in) = a ubiquinol + NAD(+) + 4 H(+)(out). Core subunit of the mitochondrial membrane respiratory chain NADH dehydrogenase (Complex I) that is believed to belong to the minimal assembly required for catalysis. Complex I functions in the transfer of electrons from NADH to the respiratory chain. The immediate electron acceptor for the enzyme is believed to be ubiquinone. This is NADH-ubiquinone oxidoreductase chain 2 (MT-ND2) from Carassius auratus (Goldfish).